The following is a 295-amino-acid chain: uncharacterized protein (295 aa).

In terms of domain architecture, ABC transporter spans L2 to V226. G34 to T41 is a binding site for ATP.

Belongs to the ABC transporter superfamily.

This is an uncharacterized protein from Bacillus subtilis (strain 168).